Here is a 194-residue protein sequence, read N- to C-terminus: Cytochrome c oxidase assembly protein CtaG (194 aa).

Residues 1-12 (MALRGPAKTVAQ) are Cytoplasmic-facing. Residues 13-35 (TVSVVIFMGALAWASVPLYDWFC) form a helical; Signal-anchor for type II membrane protein membrane-spanning segment. Residues 36–194 (RVTGFGGVTG…IEENSDTSLN (159 aa)) lie on the Periplasmic side of the membrane.

Belongs to the COX11/CtaG family.

It is found in the cell inner membrane. Its function is as follows. Exerts its effect at some terminal stage of cytochrome c oxidase synthesis, probably by being involved in the insertion of the copper B into subunit I. This is Cytochrome c oxidase assembly protein CtaG from Roseobacter denitrificans (strain ATCC 33942 / OCh 114) (Erythrobacter sp. (strain OCh 114)).